We begin with the raw amino-acid sequence, 338 residues long: Lipoate-protein ligase A (338 aa).

The BPL/LPL catalytic domain maps to 29-216 (PATQRVLFLW…AFFAHYGERV (188 aa)). ATP-binding positions include arginine 71, 76–79 (GAVF), and lysine 134. Lysine 134 serves as a coordination point for (R)-lipoate.

Belongs to the LplA family. Monomer.

Its subcellular location is the cytoplasm. The catalysed reaction is L-lysyl-[lipoyl-carrier protein] + (R)-lipoate + ATP = N(6)-[(R)-lipoyl]-L-lysyl-[lipoyl-carrier protein] + AMP + diphosphate + H(+). Its pathway is protein modification; protein lipoylation via exogenous pathway; protein N(6)-(lipoyl)lysine from lipoate: step 1/2. It participates in protein modification; protein lipoylation via exogenous pathway; protein N(6)-(lipoyl)lysine from lipoate: step 2/2. Catalyzes both the ATP-dependent activation of exogenously supplied lipoate to lipoyl-AMP and the transfer of the activated lipoyl onto the lipoyl domains of lipoate-dependent enzymes. The polypeptide is Lipoate-protein ligase A (Salmonella paratyphi B (strain ATCC BAA-1250 / SPB7)).